Consider the following 126-residue polypeptide: Glycine cleavage system H protein (126 aa).

Residues 22–104 enclose the Lipoyl-binding domain; that stretch reads VAYVGITDYA…YGEGWLIKMK (83 aa). At Lys63 the chain carries N6-lipoyllysine.

Belongs to the GcvH family. In terms of assembly, the glycine cleavage system is composed of four proteins: P, T, L and H. The cofactor is (R)-lipoate.

Functionally, the glycine cleavage system catalyzes the degradation of glycine. The H protein shuttles the methylamine group of glycine from the P protein to the T protein. This is Glycine cleavage system H protein from Bacteroides fragilis (strain YCH46).